A 235-amino-acid polypeptide reads, in one-letter code: Large ribosomal subunit protein uL1 (235 aa).

Belongs to the universal ribosomal protein uL1 family. Part of the 50S ribosomal subunit.

In terms of biological role, binds directly to 23S rRNA. The L1 stalk is quite mobile in the ribosome, and is involved in E site tRNA release. Functionally, protein L1 is also a translational repressor protein, it controls the translation of the L11 operon by binding to its mRNA. This is Large ribosomal subunit protein uL1 from Synechococcus sp. (strain CC9902).